The following is a 35-amino-acid chain: Photosystem II reaction center protein T (35 aa).

Residues 3-23 form a helical membrane-spanning segment; sequence ALVYTFLLXSTLGIIFFAIFF.

It belongs to the PsbT family. PSII is composed of 1 copy each of membrane proteins PsbA, PsbB, PsbC, PsbD, PsbE, PsbF, PsbH, PsbI, PsbJ, PsbK, PsbL, PsbM, PsbT, PsbY, PsbZ, Psb30/Ycf12, at least 3 peripheral proteins of the oxygen-evolving complex and a large number of cofactors. It forms dimeric complexes.

It is found in the plastid. The protein resides in the chloroplast thylakoid membrane. Found at the monomer-monomer interface of the photosystem II (PS II) dimer, plays a role in assembly and dimerization of PSII. PSII is a light-driven water plastoquinone oxidoreductase, using light energy to abstract electrons from H(2)O, generating a proton gradient subsequently used for ATP formation. The sequence is that of Photosystem II reaction center protein T from Cunninghamia lanceolata (China fir).